Consider the following 373-residue polypeptide: NADPH-dependent 3-keto-steroid reductase Hsd3b5 (373 aa).

NADP(+) contacts are provided by residues 10 to 15 (GAGGFL), tyrosine 155, and lysine 159. The active-site Proton donor is the lysine 159. A helical membrane pass occupies residues 288 to 308 (LSLLYWLAFLLETVSFLLRPV). Position 350 is an N6-acetyllysine (lysine 350).

Belongs to the 3-beta-HSD family. Expressed in the male liver, starting in late puberty.

It is found in the endoplasmic reticulum membrane. It localises to the mitochondrion membrane. The enzyme catalyses a 3beta-hydroxysteroid + NADP(+) = a 3-oxosteroid + NADPH + H(+). It carries out the reaction 5alpha-androstane-3beta,17beta-diol + NADP(+) = 17beta-hydroxy-5alpha-androstan-3-one + NADPH + H(+). Its pathway is steroid metabolism. Responsible for the reduction of the oxo group on the C-3 of 5alpha-androstane steroids. Catalyzes the conversion of dihydrotestosterone to its inactive form 5alpha-androstanediol, that does not bind androgen receptor/AR. Does not function as an isomerase. This chain is NADPH-dependent 3-keto-steroid reductase Hsd3b5, found in Mus musculus (Mouse).